A 286-amino-acid polypeptide reads, in one-letter code: MKKISSRQEIREQVKKWQEQGLTVALVPTMGCFHQGHLSLIKKGREIADRLIVSLFVNPIQFGPGEDLDAYPRPYEKDSRLAEELGTDVLFCPETTEMYGPNFQTNISVTTLTADLCGAGRPGHFDGVATVVTKLFHLCQPDFAIFGEKDFQQLAMIKQLVIDLDFDLQIISCPIYREDDGLAMSSRNKYLNAEQRLKALCLSQALEVAKDYVLARSAAGKTIESDEVITKARGVIIDAGYEPEYISIVDQQTLEPSPTVQPGNVMALAVRIAERIRLIDNSALLT.

Position 30–37 (30–37 (MGCFHQGH)) interacts with ATP. The active-site Proton donor is H37. Q61 is a (R)-pantoate binding site. Q61 lines the beta-alanine pocket. Residue 147-150 (GEKD) coordinates ATP. Q153 provides a ligand contact to (R)-pantoate. 184-187 (MSSR) is an ATP binding site.

The protein belongs to the pantothenate synthetase family. Homodimer.

Its subcellular location is the cytoplasm. The catalysed reaction is (R)-pantoate + beta-alanine + ATP = (R)-pantothenate + AMP + diphosphate + H(+). It participates in cofactor biosynthesis; (R)-pantothenate biosynthesis; (R)-pantothenate from (R)-pantoate and beta-alanine: step 1/1. Its function is as follows. Catalyzes the condensation of pantoate with beta-alanine in an ATP-dependent reaction via a pantoyl-adenylate intermediate. The polypeptide is Pantothenate synthetase (Desulfotalea psychrophila (strain LSv54 / DSM 12343)).